A 127-amino-acid chain; its full sequence is D-ribose pyranase (127 aa).

His20 functions as the Proton donor in the catalytic mechanism. Residues Asp28, His94, and 116 to 118 (YSN) contribute to the substrate site.

It belongs to the RbsD / FucU family. RbsD subfamily. In terms of assembly, homodecamer.

The protein localises to the cytoplasm. It carries out the reaction beta-D-ribopyranose = beta-D-ribofuranose. It functions in the pathway carbohydrate metabolism; D-ribose degradation; D-ribose 5-phosphate from beta-D-ribopyranose: step 1/2. Its function is as follows. Catalyzes the interconversion of beta-pyran and beta-furan forms of D-ribose. The polypeptide is D-ribose pyranase (Cutibacterium acnes (strain DSM 16379 / KPA171202) (Propionibacterium acnes)).